Here is a 334-residue protein sequence, read N- to C-terminus: Glyceraldehyde-3-phosphate dehydrogenase B (334 aa).

NAD(+)-binding positions include 12–13 (RI), Asp34, and Ser121. D-glyceraldehyde 3-phosphate contacts are provided by residues 149–151 (SCT), Thr180, 209–210 (TG), and Arg232. Cys150 functions as the Nucleophile in the catalytic mechanism. Position 314 (Asn314) interacts with NAD(+).

Belongs to the glyceraldehyde-3-phosphate dehydrogenase family. In terms of assembly, homotetramer.

It catalyses the reaction D-glyceraldehyde 3-phosphate + phosphate + NAD(+) = (2R)-3-phospho-glyceroyl phosphate + NADH + H(+). It functions in the pathway carbohydrate degradation; glycolysis; pyruvate from D-glyceraldehyde 3-phosphate: step 1/5. Its function is as follows. Glyceraldehyde-3-phosphate dehydrogenase; part of the gene cluster that mediates the biosynthesis of heptelidic acid (HA), a sesquiterpene lactone that acts as an inhibitor of glyceraldehyde-3-phosphatedehydrogenase (GAPDH) and a growth inhibitor of the salt-tolerant lactic acid bacteria in soy sauce brewing. The GAPDPH hepG/gdpB shows much higher resistance to HA than the GAPDH gpdA located outside of the cluster, but it does not seem to act in self-resistance. The chain is Glyceraldehyde-3-phosphate dehydrogenase B from Aspergillus oryzae (strain ATCC 42149 / RIB 40) (Yellow koji mold).